The chain runs to 229 residues: Cell division protein FtsQ (229 aa).

Residues 1–21 (MIVLLCVIFAFLVYSNWHSWL) form a helical membrane-spanning segment. Topologically, residues 22 to 229 (ESLDRNPIRA…AAVGFSPLPK (208 aa)) are periplasmic. Positions 27–97 (NPIRAYALTH…DRLSITLIEH (71 aa)) constitute a POTRA domain.

This sequence belongs to the FtsQ/DivIB family. FtsQ subfamily. In terms of assembly, part of a complex composed of FtsB, FtsL and FtsQ.

The protein resides in the cell inner membrane. Its function is as follows. Essential cell division protein. May link together the upstream cell division proteins, which are predominantly cytoplasmic, with the downstream cell division proteins, which are predominantly periplasmic. May control correct divisome assembly. The sequence is that of Cell division protein FtsQ from Actinobacillus pleuropneumoniae serotype 3 (strain JL03).